A 378-amino-acid chain; its full sequence is Calponin homolog OV9M (378 aa).

Positions methionine 1–alanine 20 are enriched in low complexity. The disordered stretch occupies residues methionine 1–valine 35. Calponin-like repeat units follow at residues isoleucine 50 to glutamine 75, valine 98 to cysteine 123, valine 151 to threonine 176, isoleucine 197 to threonine 222, isoleucine 244 to valine 269, valine 285 to threonine 310, and isoleucine 330 to lysine 355. The disordered stretch occupies residues glutamate 175–glutamine 194. The tract at residues histidine 230–glutamine 256 is disordered. Residues serine 238–glutamine 256 are compositionally biased toward polar residues. The segment at proline 331 to arginine 352 is disordered.

This sequence belongs to the calponin family. In terms of tissue distribution, found in the longitudinal muscles below the hypodermis.

Could be involved in muscle contraction. This Onchocerca volvulus protein is Calponin homolog OV9M.